The primary structure comprises 28 residues: Ranatuerin-2LT (28 aa).

A disulfide bridge links C23 with C28.

As to expression, expressed by the skin glands.

It is found in the secreted. Has antibacterial activity. This chain is Ranatuerin-2LT, found in Rana latastei (Italian agile frog).